We begin with the raw amino-acid sequence, 431 residues long: Adenylosuccinate synthetase (431 aa).

Residues Gly13–Lys19 and Gly41–Thr43 each bind GTP. The Proton acceptor role is filled by Asp14. Residues Asp14 and Gly41 each contribute to the Mg(2+) site. IMP is bound by residues Asp14–Lys17, Asn39–His42, Thr130, Arg144, Gln225, Thr240, and Arg304. His42 (proton donor) is an active-site residue. Ala300–Arg306 is a substrate binding site. Residues Arg306, Lys332 to Asp334, and Ser415 to Gly417 each bind GTP.

This sequence belongs to the adenylosuccinate synthetase family. In terms of assembly, homodimer. Mg(2+) is required as a cofactor.

It localises to the cytoplasm. It carries out the reaction IMP + L-aspartate + GTP = N(6)-(1,2-dicarboxyethyl)-AMP + GDP + phosphate + 2 H(+). It participates in purine metabolism; AMP biosynthesis via de novo pathway; AMP from IMP: step 1/2. Its function is as follows. Plays an important role in the de novo pathway of purine nucleotide biosynthesis. Catalyzes the first committed step in the biosynthesis of AMP from IMP. The polypeptide is Adenylosuccinate synthetase (Shewanella piezotolerans (strain WP3 / JCM 13877)).